A 106-amino-acid chain; its full sequence is NADH-quinone oxidoreductase subunit K (106 aa).

The next 3 membrane-spanning stretches (helical) occupy residues 10–30, 35–55, and 67–87; these read IHYY…GVMV, VLIF…FVTF, and VVFF…AIVI.

The protein belongs to the complex I subunit 4L family. As to quaternary structure, NDH-1 is composed of 14 different subunits. Subunits NuoA, H, J, K, L, M, N constitute the membrane sector of the complex.

The protein resides in the cell inner membrane. The catalysed reaction is a quinone + NADH + 5 H(+)(in) = a quinol + NAD(+) + 4 H(+)(out). In terms of biological role, NDH-1 shuttles electrons from NADH, via FMN and iron-sulfur (Fe-S) centers, to quinones in the respiratory chain. The immediate electron acceptor for the enzyme in this species is believed to be ubiquinone. Couples the redox reaction to proton translocation (for every two electrons transferred, four hydrogen ions are translocated across the cytoplasmic membrane), and thus conserves the redox energy in a proton gradient. The polypeptide is NADH-quinone oxidoreductase subunit K (Leptospira borgpetersenii serovar Hardjo-bovis (strain JB197)).